A 344-amino-acid chain; its full sequence is Heat-inducible transcription repressor hrcA (344 aa).

Belongs to the HrcA family.

Functionally, negative regulator of class I heat shock genes (grpE-dnaK-dnaJ and groELS operons). Prevents heat-shock induction of these operons. In Streptococcus pyogenes serotype M3 (strain ATCC BAA-595 / MGAS315), this protein is Heat-inducible transcription repressor hrcA.